The chain runs to 70 residues: uncharacterized protein (70 aa).

The segment at 40 to 70 is disordered; that stretch reads LHQQRTAHKVTSPPSQRPQNSETKSDSQNRS. The segment covering 51–61 has biased composition (polar residues); that stretch reads SPPSQRPQNSE.

This is an uncharacterized protein from Bdellovibrio phage phiMH2K (Bacteriophage phiMH2K).